Here is a 263-residue protein sequence, read N- to C-terminus: Small ribosomal subunit protein bS1c (263 aa).

S1 motif domains lie at 27 to 96 (GDIV…LSIR), 114 to 178 (DSLL…LSHR), and 192 to 260 (GNII…LSMK).

This sequence belongs to the bacterial ribosomal protein bS1 family.

It is found in the plastid. Its subcellular location is the chloroplast. The chain is Small ribosomal subunit protein bS1c (rps1) from Porphyra purpurea (Red seaweed).